A 43-amino-acid polypeptide reads, in one-letter code: Potassium channel toxin gamma-KTx 3.3 (43 aa).

4 cysteine pairs are disulfide-bonded: Cys-5-Cys-23, Cys-11-Cys-34, Cys-20-Cys-39, and Cys-24-Cys-41.

The protein belongs to the ergtoxin family. Gamma-KTx 3 subfamily. As to expression, expressed by the venom gland.

It localises to the secreted. Functionally, blocks Kv11/ERG potassium channels. The protein is Potassium channel toxin gamma-KTx 3.3 of Centruroides sculpturatus (Arizona bark scorpion).